A 305-amino-acid polypeptide reads, in one-letter code: Probable G-protein coupled receptor 141 (305 aa).

Residues 1–22 (MPGHNTSRNSSCDPIVTPHLIS) lie on the Extracellular side of the membrane. N-linked (GlcNAc...) asparagine glycans are attached at residues Asn-5 and Asn-9. The chain crosses the membrane as a helical span at residues 23–43 (LYFIVLIGGLVGVISILFLLV). Residues 44–50 (KMNTRSV) lie on the Cytoplasmic side of the membrane. The helical transmembrane segment at 51-71 (TTMAVINLVVVHSVFLLTVPF) threads the bilayer. At 72–89 (RLTYLIKKTWMFGLPFCK) the chain is on the extracellular side. Residues 90–110 (FVSAMLHIHMYLTFLFYVVIL) form a helical membrane-spanning segment. At 111–131 (VTRYLIFFKCKDKVEFYRKLH) the chain is on the cytoplasmic side. The helical transmembrane segment at 132–152 (AVAASAGMWTLVIVIVVPLVV) threads the bilayer. The Extracellular segment spans residues 153–183 (SRYGIHEEYNEEHCFKFHKELAYTYVKIINY). Residues 184–204 (MIVIFVIAVAVILLVFQVFII) traverse the membrane as a helical segment. At 205–227 (MLMVQKLRHSLLSHQEFWAQLKN) the chain is on the cytoplasmic side. A helical membrane pass occupies residues 228–248 (LFFIGVILVCFLPYQFFRIYY). At 249–267 (LNVVTHSNACNSKVAFYNE) the chain is on the extracellular side. The helical transmembrane segment at 268-288 (IFLSVTAISCYDLLLFVFGGS) threads the bilayer. The Cytoplasmic segment spans residues 289 to 305 (HWFKQKIIGLWNCVLCR).

The protein belongs to the G-protein coupled receptor 1 family.

The protein localises to the cell membrane. Orphan receptor. The sequence is that of Probable G-protein coupled receptor 141 (GPR141) from Homo sapiens (Human).